Consider the following 988-residue polypeptide: Transposase for transposon Tn21 (988 aa).

The tract at residues 672–696 (GDGTTSSSDEQNFRTASKAKSTGHI) is disordered. A compositionally biased stretch (polar residues) spans 674-695 (GTTSSSDEQNFRTASKAKSTGH).

This sequence belongs to the transposase 7 family.

Required for transposition of transposon Tn21. The protein is Transposase for transposon Tn21 (tnpA) of Escherichia coli.